Consider the following 66-residue polypeptide: Cold shock-like protein CspLA (66 aa).

The CSD domain occupies 4–63 (GTVKWFNAEKGFGFIERENGDDVFVHFSAIQGDGFKSLDEGQAVTFDVEEGQRGPQAANV).

Homodimer.

It localises to the cytoplasm. The chain is Cold shock-like protein CspLA (cspLA) from Listeria innocua serovar 6a (strain ATCC BAA-680 / CLIP 11262).